A 406-amino-acid polypeptide reads, in one-letter code: NADH-quinone oxidoreductase subunit D (406 aa).

It belongs to the complex I 49 kDa subunit family. As to quaternary structure, NDH-1 is composed of 14 different subunits. Subunits NuoB, C, D, E, F, and G constitute the peripheral sector of the complex.

The protein resides in the cell inner membrane. It catalyses the reaction a quinone + NADH + 5 H(+)(in) = a quinol + NAD(+) + 4 H(+)(out). NDH-1 shuttles electrons from NADH, via FMN and iron-sulfur (Fe-S) centers, to quinones in the respiratory chain. The immediate electron acceptor for the enzyme in this species is believed to be ubiquinone. Couples the redox reaction to proton translocation (for every two electrons transferred, four hydrogen ions are translocated across the cytoplasmic membrane), and thus conserves the redox energy in a proton gradient. This chain is NADH-quinone oxidoreductase subunit D, found in Leptospira biflexa serovar Patoc (strain Patoc 1 / Ames).